The following is a 515-amino-acid chain: Sodium/hydrogen exchanger 9B1 (515 aa).

Positions 1 to 10 are enriched in basic and acidic residues; it reads MHTTESKNEH. Positions 1 to 32 are disordered; sequence MHTTESKNEHLEDENFQTSTTPQSLIDPNNTA. Over residues 16–32 the composition is skewed to polar residues; that stretch reads FQTSTTPQSLIDPNNTA. 13 helical membrane-spanning segments follow: residues 66 to 86, 95 to 115, 116 to 136, 152 to 172, 187 to 207, 215 to 235, 260 to 280, 284 to 304, 337 to 357, 368 to 388, 407 to 427, 431 to 451, and 472 to 492; these read VIITNGVILFVIWCMTWSILG, LFGLFIIFYSAIIGGKILQLI, RIPLVPPLPPLLGMLLAGFTI, WSSILRSIALTIILIRAGLGL, LAVGPCLMEASAAAVFSHFIM, FLLGFVLGAVSPAVVVPYMMV, ILAITGFNTCLSIVFSSGGIL, IASIRNVCISLLAGIVLGFFV, IGLHGSGGLCTLVLSFIAGTK, IITTVWDIFQPLLFGLVGAEV, LALCVRILTTYLLMCFAGFSF, IFIALAWMPKATVQAVLGPLA, and VAFLAILITAPNGALLMGILG.

It belongs to the monovalent cation:proton antiporter 1 (CPA1) transporter (TC 2.A.36) family. In terms of tissue distribution, expressed only in the testis.

It localises to the cell projection. The protein localises to the cilium. It is found in the flagellum membrane. Its function is as follows. Sperm-specific Na(+)/H(+) exchanger involved in intracellular pH regulation of spermatozoa. Involved in sperm motility and fertility. This Homo sapiens (Human) protein is Sodium/hydrogen exchanger 9B1.